A 39-amino-acid chain; its full sequence is Photosystem II reaction center protein L (39 aa).

Residues 18–38 form a helical membrane-spanning segment; sequence SLYLGLLSVFVLGILFSSYFF.

Belongs to the PsbL family. In terms of assembly, PSII is composed of 1 copy each of membrane proteins PsbA, PsbB, PsbC, PsbD, PsbE, PsbF, PsbH, PsbI, PsbJ, PsbK, PsbL, PsbM, PsbT, PsbX, PsbY, Psb30/Ycf12, peripheral proteins PsbO, CyanoQ (PsbQ), PsbU, PsbV and a large number of cofactors. It forms dimeric complexes.

It is found in the cellular thylakoid membrane. Functionally, one of the components of the core complex of photosystem II (PSII). PSII is a light-driven water:plastoquinone oxidoreductase that uses light energy to abstract electrons from H(2)O, generating O(2) and a proton gradient subsequently used for ATP formation. It consists of a core antenna complex that captures photons, and an electron transfer chain that converts photonic excitation into a charge separation. This subunit is found at the monomer-monomer interface and is required for correct PSII assembly and/or dimerization. This Prochlorococcus marinus (strain MIT 9301) protein is Photosystem II reaction center protein L.